The chain runs to 90 residues: Probable acyl carrier protein (90 aa).

The region spanning 9–90 is the Carrier domain; sequence QVTVEELSAL…LVNGALKTGV (82 aa). The residue at position 47 (Ser-47) is an O-(pantetheine 4'-phosphoryl)serine.

In terms of processing, 4'-phosphopantetheine is transferred from CoA to a specific serine of the apo-ACP-like protein.

Functionally, involved in developmentally regulated synthesis of a compound biosynthetically related to polyketide antibiotics which is essential for spore color in Streptomyces coelicolor. This chain is Probable acyl carrier protein, found in Streptomyces coelicolor (strain ATCC BAA-471 / A3(2) / M145).